The sequence spans 840 residues: V-type proton ATPase subunit a, vacuolar isoform (840 aa).

Residue alanine 2 is modified to N-acetylalanine. Over 2 to 404 the chain is Cytoplasmic; sequence AEKEEAIFRS…DCYGIAQYRE (403 aa). Residues 117–145 adopt a coiled-coil conformation; the sequence is LEERLIQMEDATDQIEVQKNDLEQYRFIL. The helical transmembrane segment at 405–423 threads the bilayer; that stretch reads INAGLPTIVTFPFMFAIMF. Residues 424-425 are Vacuolar-facing; it reads GD. The chain crosses the membrane as a helical span at residues 426 to 442; it reads MGHGFLMTLAALSLVLN. Residues 443–456 are Cytoplasmic-facing; sequence EKKINKMKRGEIFD. The chain crosses the membrane as a helical span at residues 457–486; that stretch reads MAFTGRYIILLMGVFSMYTGFLYNDIFSKT. Over 487–534 the chain is Vacuolar; sequence MTIFKSGWKWPDHWKKGESITATSVGTYPIGLDWAWHGTENALLFSNS. The chain crosses the membrane as a helical span at residues 535–554; sequence YKMKLSILMGFIHMTYSYFF. The Cytoplasmic segment spans residues 555–572; it reads SLANHLYFNSMIDIIGNF. Residues 573–593 traverse the membrane as a helical segment; that stretch reads IPGLLFMQGIFGYLSVCIVYK. Residues 594 to 636 are Vacuolar-facing; that stretch reads WAVDWVKDGKPAPGLLNMLINMFLSPGTIDDELYPHQAKVQVF. The chain crosses the membrane as a helical span at residues 637–656; sequence LLLMALVCIPWLLLVKPLHF. Over 657–719 the chain is Cytoplasmic; it reads KFTHKKKSHE…DIMIHQVIHT (63 aa). Residues 720–744 traverse the membrane as a helical segment; sequence IEFCLNCVSHTASYLRLWALSLAHA. Topologically, residues 745-765 are vacuolar; that stretch reads QLSSVLWTMTIQIAFGFRGFV. The chain crosses the membrane as a helical span at residues 766-804; the sequence is GVFMTVALFAMWFALTCAVLVLMEGTSAMLHSLRLHWVE. At 805–840 the chain is on the cytoplasmic side; sequence SMSKFFVGEGLPYEPFAFEYKDMEVAVASASSSASS.

The protein belongs to the V-ATPase 116 kDa subunit family. V-ATPase is a heteromultimeric enzyme composed of a peripheral catalytic V1 complex (components A to H) attached to an integral membrane V0 proton pore complex (components: a, c, c', c'', d, e, f and VOA1). Post-translationally, glycosylated.

The protein resides in the vacuole membrane. Functionally, subunit of the V0 complex of vacuolar(H+)-ATPase (V-ATPase), a multisubunit enzyme composed of a peripheral complex (V1) that hydrolyzes ATP and a membrane integral complex (V0) that translocates protons. V-ATPase is responsible for acidifying and maintaining the pH of intracellular compartments. Is present only in vacuolar V-ATPase complexes; enzymes containing this subunit have a 4-fold higher ratio of proton transport to ATP hydrolysis than complexes containing the Golgi/endosomal isoform and undergo reversible dissociation of V1 and V0 in response to glucose depletion. The polypeptide is V-type proton ATPase subunit a, vacuolar isoform (Saccharomyces cerevisiae (strain ATCC 204508 / S288c) (Baker's yeast)).